Reading from the N-terminus, the 264-residue chain is 3-methyl-2-oxobutanoate hydroxymethyltransferase (264 aa).

Mg(2+) contacts are provided by aspartate 45 and aspartate 84. 3-methyl-2-oxobutanoate-binding positions include 45 to 46, aspartate 84, and lysine 112; that span reads DS. Position 114 (glutamate 114) interacts with Mg(2+). Glutamate 181 acts as the Proton acceptor in catalysis.

The protein belongs to the PanB family. In terms of assembly, homodecamer; pentamer of dimers. Mg(2+) serves as cofactor.

The protein resides in the cytoplasm. The catalysed reaction is 3-methyl-2-oxobutanoate + (6R)-5,10-methylene-5,6,7,8-tetrahydrofolate + H2O = 2-dehydropantoate + (6S)-5,6,7,8-tetrahydrofolate. It participates in cofactor biosynthesis; (R)-pantothenate biosynthesis; (R)-pantoate from 3-methyl-2-oxobutanoate: step 1/2. Its function is as follows. Catalyzes the reversible reaction in which hydroxymethyl group from 5,10-methylenetetrahydrofolate is transferred onto alpha-ketoisovalerate to form ketopantoate. This chain is 3-methyl-2-oxobutanoate hydroxymethyltransferase, found in Psychromonas ingrahamii (strain DSM 17664 / CCUG 51855 / 37).